We begin with the raw amino-acid sequence, 950 residues long: Glycine dehydrogenase (decarboxylating) (950 aa).

N6-(pyridoxal phosphate)lysine is present on K698.

It belongs to the GcvP family. As to quaternary structure, the glycine cleavage system is composed of four proteins: P, T, L and H. Requires pyridoxal 5'-phosphate as cofactor.

It carries out the reaction N(6)-[(R)-lipoyl]-L-lysyl-[glycine-cleavage complex H protein] + glycine + H(+) = N(6)-[(R)-S(8)-aminomethyldihydrolipoyl]-L-lysyl-[glycine-cleavage complex H protein] + CO2. Its function is as follows. The glycine cleavage system catalyzes the degradation of glycine. The P protein binds the alpha-amino group of glycine through its pyridoxal phosphate cofactor; CO(2) is released and the remaining methylamine moiety is then transferred to the lipoamide cofactor of the H protein. The polypeptide is Glycine dehydrogenase (decarboxylating) (Neisseria gonorrhoeae (strain ATCC 700825 / FA 1090)).